The following is a 138-amino-acid chain: Transcription antitermination protein NusB (138 aa).

This sequence belongs to the NusB family.

In terms of biological role, involved in transcription antitermination. Required for transcription of ribosomal RNA (rRNA) genes. Binds specifically to the boxA antiterminator sequence of the ribosomal RNA (rrn) operons. This is Transcription antitermination protein NusB from Helicobacter pylori (strain G27).